The primary structure comprises 470 residues: 3-isopropylmalate dehydratase large subunit (470 aa).

[4Fe-4S] cluster-binding residues include Cys-349, Cys-409, and Cys-412.

The protein belongs to the aconitase/IPM isomerase family. LeuC type 1 subfamily. As to quaternary structure, heterodimer of LeuC and LeuD. [4Fe-4S] cluster is required as a cofactor.

It carries out the reaction (2R,3S)-3-isopropylmalate = (2S)-2-isopropylmalate. It functions in the pathway amino-acid biosynthesis; L-leucine biosynthesis; L-leucine from 3-methyl-2-oxobutanoate: step 2/4. Its function is as follows. Catalyzes the isomerization between 2-isopropylmalate and 3-isopropylmalate, via the formation of 2-isopropylmaleate. The protein is 3-isopropylmalate dehydratase large subunit of Afipia carboxidovorans (strain ATCC 49405 / DSM 1227 / KCTC 32145 / OM5) (Oligotropha carboxidovorans).